Here is a 389-residue protein sequence, read N- to C-terminus: MFDIKSIIRPNILTLEPYRCARDDFKTGILLDANENTHGPAIPTPDETELALELNRYPDPHQLELKQQVIDFREKHPNKYTKEKLSVENLCLGVGSDESIDMLLRCVCVPGKDKMLICPPTYGMYSICATVNDVVIEKVPLTVPDFQIDIPAILSKVKSDPNIKLLYLTSPGNPTGKLINVDSIITLLEELLNCWQGLIVVDEAYIDFTEPGSSMSTLVNQYPNLVVLQTLSKSFGLAGIRLGITFCSKELSWYLNAMKYPYNISSLTSNVALKATKQGLEIMENYVSKITEQRDIVLQKLLSLKYVGRNIGGLDSNFVLVEVLDKQGNPSNEVAKQLYNTLATGKSIVVRFRGSELNCVGGLRISIGTEEENKQLLEQFEAVLNDINQ.

Residue lysine 233 is modified to N6-(pyridoxal phosphate)lysine.

This sequence belongs to the class-II pyridoxal-phosphate-dependent aminotransferase family. It depends on pyridoxal 5'-phosphate as a cofactor.

It catalyses the reaction L-histidinol phosphate + 2-oxoglutarate = 3-(imidazol-4-yl)-2-oxopropyl phosphate + L-glutamate. It participates in amino-acid biosynthesis; L-histidine biosynthesis; L-histidine from 5-phospho-alpha-D-ribose 1-diphosphate: step 7/9. This chain is Histidinol-phosphate aminotransferase (HIS5), found in Candida maltosa (Yeast).